A 520-amino-acid polypeptide reads, in one-letter code: 3-phosphoshikimate 1-carboxyvinyltransferase, chloroplastic (520 aa).

The N-terminal 76 residues, 1–76 (MAQVSRICNG…KVMSSVSTAE (76 aa)), are a transit peptide targeting the chloroplast. A disordered region spans residues 20–39 (LSKSSQRKSPLSVSLKTQQH). 3-phosphoshikimate-binding residues include lysine 99, serine 100, and arginine 104. Lysine 99 provides a ligand contact to phosphoenolpyruvate. Glycine 177 and arginine 207 together coordinate phosphoenolpyruvate. 6 residues coordinate 3-phosphoshikimate: serine 254, serine 255, glutamine 256, serine 282, aspartate 407, and lysine 434. Residue glutamine 256 participates in phosphoenolpyruvate binding. Aspartate 407 acts as the Proton acceptor in catalysis. The phosphoenolpyruvate site is built by arginine 438, arginine 480, and lysine 505.

It belongs to the EPSP synthase family.

The protein localises to the plastid. It localises to the chloroplast. The enzyme catalyses 3-phosphoshikimate + phosphoenolpyruvate = 5-O-(1-carboxyvinyl)-3-phosphoshikimate + phosphate. It participates in metabolic intermediate biosynthesis; chorismate biosynthesis; chorismate from D-erythrose 4-phosphate and phosphoenolpyruvate: step 6/7. Its function is as follows. Catalyzes the transfer of the enolpyruvyl moiety of phosphoenolpyruvate (PEP) to the 5-hydroxyl of shikimate-3-phosphate (S3P) to produce enolpyruvyl shikimate-3-phosphate and inorganic phosphate. The protein is 3-phosphoshikimate 1-carboxyvinyltransferase, chloroplastic of Arabidopsis thaliana (Mouse-ear cress).